Reading from the N-terminus, the 545-residue chain is Chaperonin GroEL 3 (545 aa).

ATP contacts are provided by residues 30 to 33, Lys-51, 87 to 91, Gly-415, and Asp-496; these read TLGP and DGTTT.

Belongs to the chaperonin (HSP60) family. As to quaternary structure, forms a cylinder of 14 subunits composed of two heptameric rings stacked back-to-back. Interacts with the co-chaperonin GroES.

The protein localises to the cytoplasm. The catalysed reaction is ATP + H2O + a folded polypeptide = ADP + phosphate + an unfolded polypeptide.. Its function is as follows. Together with its co-chaperonin GroES, plays an essential role in assisting protein folding. The GroEL-GroES system forms a nano-cage that allows encapsulation of the non-native substrate proteins and provides a physical environment optimized to promote and accelerate protein folding. This chain is Chaperonin GroEL 3, found in Nitrobacter hamburgensis (strain DSM 10229 / NCIMB 13809 / X14).